The sequence spans 1148 residues: MTLDKALVLRTCANNMADHCGLIWPASGTVESRYWQSTRRHENGLVGLLWGAGTSAFLSVHADARWIVCEVAVADIISLEEPGMVKFPRAEVVHVGDRISASHFISARQADPASTSTSTSTSTLTPMPTAIPTPMPAVASVTLPVAEQARHEVFDVASVSAAAAPVNTLPVTTPQNLQTATYGSTLSGDNHSRLIAGYGSNETAGNHSDLIAGYGSTGTAGYGSTQTSGEDSSLTAGYGSTQTAQEGSNLTAGYGSTGTAGSDSSLIAGYGSTQTSGGDSSLTAGYGSTQTAQEGSNLTAGYGSTGTAGVDSSLIAGYGSTQTSGSDSALTAGYGSTQTAQEGSNLTAGYGSTGTAGSDSSLIAGYGSTQTSGSDSSLTAGYGSTQTAQEGSNLTAGYGSTGTAGVDSSLIAGYGSTQTSGSDSALTAGYGSTQTAQEGSNLTAGYGSTGTAGADSSLIAGYGSTQTSGSESSLTAGYGSTQTAREGSTLTAGYGSTGTAGADSSLIAGYGSTQTSGSESSLTAGYGSTQTAQQGSVLTSGYGSTQTAGAASNLTTGYGSTGTAGHESFIIAGYGSTQTAGHKSILTAGYGSTQTARDGSYLIAGYGSTGTAGSGSSLIAGYGSTQTASYRSMLTAGYGSTQTAREHSDLVTGYGSTSTAGSNSSLIAGYGSTQTAGFKSILTAGYGSTQTAQERSDLVAGYGSTSTAGYSSSLIAGYGSTQTAGYESTLTAGYGSTQTAQENSSLTTGYGSTSTAGYSSSLIAGYGSTQTAGYESTLTAGYGSTQTAQERSDLVTGYGSTSTAGYASSLIAGYGSTQTAGYESTLTAGYGSTQTAQENSSLTTGYGSTSTAGFASSLIAGYGSTQTAGYKSTLTAGYGSTQTAEYGSSLTAGYGSTATAGQDSSLIAGYGSSLTSGIRSFLTAGYGSTLIAGLRSVLIAGYGSSLTSGIRSTLTAGYGSNQIASYGSSLIAGHESIQVAGNKSMLIAGKGSSQTAGFRSTLIAGAGSVQLAGDRSRLIAGADSNQTAGDRSKLLAGNNSYLTAGDRSKLTGGHDCTLMAGDQSRLTAGKNSVLTAGARSKLIGSEGSTLSAGEDSTLIFRLWDGKRYRQLVARTGENGVEADIPYYVNEDDDIVDKPDEDDDWIEVK.

Disordered regions lie at residues 110–131 (ADPA…PTAI), 222–256 (YGST…GYGS), and 367–394 (GSTQ…GSNL). The span at 114–128 (STSTSTSTSTLTPMP) shows a compositional bias: low complexity. Residues 180–1099 (ATYGSTLSGD…LSAGEDSTLI (920 aa)) are octapeptide periodicity. Residues 230–250 (EDSSLTAGYGSTQTAQEGSNL) show a composition bias toward polar residues.

This sequence belongs to the bacterial ice nucleation protein family.

It is found in the cell outer membrane. Its function is as follows. Ice nucleation proteins enable bacteria to nucleate crystallization in supercooled water. The chain is Ice nucleation protein (inaK) from Pseudomonas syringae.